Reading from the N-terminus, the 106-residue chain is uncharacterized protein (106 aa).

The chain crosses the membrane as a helical span at residues 78-98; that stretch reads LAITGYVVSIPIVLPILIIFI.

It localises to the membrane. This is an uncharacterized protein from Haemophilus influenzae (strain ATCC 51907 / DSM 11121 / KW20 / Rd).